Here is a 1382-residue protein sequence, read N- to C-terminus: MDEEENHYVSQLREVYSSCDTTGTGFLDRQELTQLCLKLHLEQQLPVLLQTLLGNDHFARVNFEEFKEGFVAVLSSNAGVRPSDEDSSSLESAASSAIPPKYVNGSKWYGRRSRPELCDAATEARRVPEQQTQASLKSHLWRSASLESVESPKSDEEAESTKEAQNELFEAQGQLQTWDSEDFGSPQKSCSPSFDTPESQIRGVWEELGVGSSGHLSEQELAVVCQSVGLQGLEKEELEDLFNKLDQDGDGKVSLEEFQLGLFSHEPALLLESSTRVKPSKAWSHYQVPEESGCHTTTTSSLVSLCSSLRLFSSIDDGSGFAFPDQVLAMWTQEGIQNGREILQSLDFSVDEKVNLLELTWALDNELMTVDSAVQQAALACYHQELSYQQGQVEQLARERDKARQDLERAEKRNLEFVKEMDDCHSTLEQLTEKKIKHLEQGYRERLSLLRSEVEAERELFWEQAHRQRAALEWDVGRLQAEEAGLREKLTLALKENSRLQKEIVEVVEKLSDSERLALKLQKDLEFVLKDKLEPQSAELLAQEERFAAVLKEYELKCRDLQDRNDELQAELEGLWARLPKNRHSPSWSPDGRRRQLPGLGPAGISFLGNSAPVSIETELMMEQVKEHYQDLRTQLETKVNYYEREIAALKRNFEKERKDMEQARRREVSVLEGQKADLEELHEKSQEVIWGLQEQLQDTARGPEPEQMGLAPCCTQALCGLALRHHSHLQQIRREAEAELSGELSGLGALPARRDLTLELEEPPQGPLPRGSQRSEQLELERALKLQPCASEKRAQMCVSLALEEEELELARGKRVDGPSLEAEMQALPKDGLVAGSGQEGTRGLLPLRPGCGERPLAWLAPGDGRESEEAAGAGPRRRQAQDTEATQSPAPAPAPASHGPSERWSRMQPCGVDGDIVPKEPEPFGASAAGLEQPGARELPLLGTERDASQTQPRMWEPPLRPAASCRGQAERLQAIQEERARSWSRGTQEQASEQQARAEGALEPGCHKHSVEVARRGSLPSHLQLADPQGSWQEQLAAPEEGETKIALEREKDDMETKLLHLEDVVRALEKHVDLRENDRLEFHRLSEENTLLKNDLGRVRQELEAAESTHDAQRKEIEVLKKDKEKACSEMEVLNRQNQNYKDQLSQLNVRVLQLGQEASTHQAQNEEHRVTIQMLTQSLEEVVRSGQQQSDQIQKLRVELECLNQEHQSLQLPWSELTQTLEESQDQVQGAHLRLRQAQAQHLQEVRLVPQDRVAELHRLLSLQGEQARRRLDAQREEHEKQLKATEERVEEAEMILKNMEMLLQEKVDKLKEQFEKNTKSDLLLKELYVENAHLVRALQATEEKQRGAEKQSRLLEEKVRALNKLVSRIAPAALSV.

2 consecutive EF-hand domains span residues 7 to 42 and 41 to 76; these read HYVS…LHLE and LEQQ…VLSS. Residues 144-164 are disordered; it reads ASLESVESPKSDEEAESTKEA. Residue Ser-148 is modified to Phosphoserine. The segment covering 150–164 has biased composition (basic and acidic residues); the sequence is ESPKSDEEAESTKEA. EF-hand domains follow at residues 196 to 231 and 233 to 268; these read TPES…VGLQ and LEKE…HEPA. Ca(2+) is bound by residues Asp-246, Asp-248, Asp-250, Lys-252, and Glu-257. Coiled coils occupy residues 384 to 424, 484 to 579, and 616 to 699; these read QELS…MDDC, AGLR…WARL, and IETE…QLQD. Residues 495-497 carry the KEN box motif; that stretch reads KEN. Residues 633–641 carry the D-box motif; the sequence is RTQLETKVN. Disordered regions lie at residues 857-969 and 982-1006; these read PLAW…ASCR and RARS…GALE. Over residues 991 to 1004 the composition is skewed to low complexity; the sequence is QEQASEQQARAEGA. Residues 1046–1375 adopt a coiled-coil conformation; it reads ETKIALEREK…RALNKLVSRI (330 aa).

In terms of assembly, interacts with gamma-tubulin and TUBGCP4. Interacts with anaphase promoting complex/cyclosome (APC/C). Interacts with CDC20 and FZR1. Isoform 2 interacts with LCA5 and USH2A. Isoform 2 interacts with DZANK1. Post-translationally, phosphorylated by PLK1 which disrupts its centrosome association and interaction with gamma-tubulin. In terms of processing, ubiquitinated by the APC/C complex leading to its degradation. As to expression, expressed in KYSE-150 esophageal carcinoma, HeLa cervical carcinoma and U2OS osteosarcoma cells. Expression is regulated in a cell cycle-dependent manner and peaks during G2/M phase (at protein level). Expressed in fetal heart, skeletal muscle, liver, lung and cochlea, and in adult brain, testis, kidney and retina.

The protein resides in the cytoplasm. It is found in the cytoskeleton. It localises to the microtubule organizing center. Its subcellular location is the centrosome. In terms of biological role, involved in the microtubule organization in interphase cells. Overexpression induces the fragmentation of the Golgi, and causes lysosomes to disperse toward the cell periphery; it also interferes with mitotic spindle assembly. Involved in vesicle transport in photoreceptor cells. May play a role in ovarian carcinogenesis. The sequence is that of Ninein-like protein (NINL) from Homo sapiens (Human).